The following is a 126-amino-acid chain: Histone H2B type 1-B (126 aa).

Over residues 1 to 12 (MPEPSKSAPAPK) the composition is skewed to low complexity. Residues 1–35 (MPEPSKSAPAPKKGSKKAITKAQKKDGKKRKRSRK) form a disordered region. Proline 2 carries the N-acetylproline modification. Residue glutamate 3 is modified to ADP-ribosyl glutamic acid. The residue at position 6 (lysine 6) is an N6-(2-hydroxyisobutyryl)lysine; alternate. An N6-(beta-hydroxybutyryl)lysine; alternate modification is found at lysine 6. At lysine 6 the chain carries N6-acetyllysine; alternate. An N6-butyryllysine; alternate modification is found at lysine 6. The residue at position 6 (lysine 6) is an N6-crotonyllysine; alternate. N6-lactoyllysine; alternate is present on lysine 6. A Glycyl lysine isopeptide (Lys-Gly) (interchain with G-Cter in SUMO2); alternate cross-link involves residue lysine 6. Residue serine 7 is modified to ADP-ribosylserine. Position 12 is an N6-(beta-hydroxybutyryl)lysine; alternate (lysine 12). N6-acetyllysine; alternate is present on residues lysine 12 and lysine 13. N6-crotonyllysine; alternate occurs at positions 12 and 13. Position 12 is an N6-lactoyllysine; alternate (lysine 12). Lysine 13 is modified (N6-(2-hydroxyisobutyryl)lysine; alternate). Serine 15 carries the post-translational modification Phosphoserine; by STK4/MST1. 4 positions are modified to N6-acetyllysine; alternate: lysine 16, lysine 17, lysine 21, and lysine 24. Lysine 16, lysine 17, lysine 21, and lysine 24 each carry N6-crotonyllysine; alternate. N6-lactoyllysine; alternate occurs at positions 16, 17, 21, and 24. Residues lysine 17 and lysine 21 each carry the N6-(beta-hydroxybutyryl)lysine; alternate modification. N6-glutaryllysine; alternate is present on lysine 17. Lysine 21 and lysine 24 each carry N6-(2-hydroxyisobutyryl)lysine; alternate. Lysine 21 carries the post-translational modification N6-butyryllysine; alternate. Lysine 21 is covalently cross-linked (Glycyl lysine isopeptide (Lys-Gly) (interchain with G-Cter in SUMO2); alternate). Position 25 is an N6-(2-hydroxyisobutyryl)lysine (lysine 25). An N6-(2-hydroxyisobutyryl)lysine; alternate modification is found at lysine 35. Position 35 is an N6-(beta-hydroxybutyryl)lysine; alternate (lysine 35). Lysine 35 carries the N6-crotonyllysine; alternate modification. At lysine 35 the chain carries N6-glutaryllysine; alternate. Lysine 35 carries the post-translational modification N6-succinyllysine; alternate. Lysine 35 participates in a covalent cross-link: Glycyl lysine isopeptide (Lys-Gly) (interchain with G-Cter in ubiquitin); alternate. Glutamate 36 carries the post-translational modification PolyADP-ribosyl glutamic acid. Serine 37 carries the phosphoserine; by AMPK modification. N6-(2-hydroxyisobutyryl)lysine; alternate occurs at positions 44, 47, and 58. Residue lysine 44 is modified to N6-lactoyllysine; alternate. 2 positions are modified to N6-glutaryllysine; alternate: lysine 44 and lysine 47. N6-methyllysine; alternate is present on lysine 47. Lysine 58 carries the N6,N6-dimethyllysine; alternate modification. A Dimethylated arginine modification is found at arginine 80. At lysine 86 the chain carries N6-(2-hydroxyisobutyryl)lysine; alternate. Lysine 86 carries the N6-(beta-hydroxybutyryl)lysine; alternate modification. Residue lysine 86 is modified to N6-acetyllysine; alternate. Residue lysine 86 is modified to N6-lactoyllysine; alternate. Lysine 86 is modified (N6,N6,N6-trimethyllysine; alternate). Residues arginine 87 and arginine 93 each carry the omega-N-methylarginine modification. N6-(2-hydroxyisobutyryl)lysine; alternate is present on lysine 109. An N6-lactoyllysine; alternate modification is found at lysine 109. Lysine 109 is modified (N6-glutaryllysine; alternate). The residue at position 109 (lysine 109) is an N6-methyllysine; alternate. O-linked (GlcNAc) serine glycosylation is present at serine 113. Residue threonine 116 is modified to Phosphothreonine. 2 positions are modified to N6-(2-hydroxyisobutyryl)lysine; alternate: lysine 117 and lysine 121. Residues lysine 117 and lysine 121 each carry the N6-(beta-hydroxybutyryl)lysine; alternate modification. N6-lactoyllysine; alternate occurs at positions 117 and 121. 2 positions are modified to N6-glutaryllysine; alternate: lysine 117 and lysine 121. Lysine 117 and lysine 121 each carry N6-succinyllysine; alternate. Lysine 117 is subject to N6-malonyllysine; alternate. Lysine 117 carries the post-translational modification N6-methylated lysine; alternate. A Glycyl lysine isopeptide (Lys-Gly) (interchain with G-Cter in ubiquitin); alternate cross-link involves residue lysine 121.

It belongs to the histone H2B family. The nucleosome is a histone octamer containing two molecules each of H2A, H2B, H3 and H4 assembled in one H3-H4 heterotetramer and two H2A-H2B heterodimers. The octamer wraps approximately 147 bp of DNA. Post-translationally, monoubiquitination at Lys-35 (H2BK34Ub) by the MSL1/MSL2 dimer is required for histone H3 'Lys-4' (H3K4me) and 'Lys-79' (H3K79me) methylation and transcription activation at specific gene loci, such as HOXA9 and MEIS1 loci. Similarly, monoubiquitination at Lys-121 (H2BK120Ub) by the RNF20/40 complex gives a specific tag for epigenetic transcriptional activation and is also prerequisite for histone H3 'Lys-4' and 'Lys-79' methylation. It also functions cooperatively with the FACT dimer to stimulate elongation by RNA polymerase II. H2BK120Ub also acts as a regulator of mRNA splicing: deubiquitination by USP49 is required for efficient cotranscriptional splicing of a large set of exons. Phosphorylation at Ser-37 (H2BS36ph) by AMPK in response to stress promotes transcription. Phosphorylated on Ser-15 (H2BS14ph) by STK4/MST1 during apoptosis; which facilitates apoptotic chromatin condensation. Also phosphorylated on Ser-15 in response to DNA double strand breaks (DSBs), and in correlation with somatic hypermutation and immunoglobulin class-switch recombination. In terms of processing, glcNAcylation at Ser-113 promotes monoubiquitination of Lys-121. It fluctuates in response to extracellular glucose, and associates with transcribed genes. Post-translationally, ADP-ribosylated by PARP1 or PARP2 on Ser-7 (H2BS6ADPr) in response to DNA damage. H2BS6ADPr promotes recruitment of CHD1L. Mono-ADP-ribosylated on Glu-3 (H2BE2ADPr) by PARP3 in response to single-strand breaks. Poly ADP-ribosylation on Glu-36 (H2BE35ADPr) by PARP1 regulates adipogenesis: it inhibits phosphorylation at Ser-37 (H2BS36ph), thereby blocking expression of pro-adipogenetic genes. Crotonylation (Kcr) is specifically present in male germ cells and marks testis-specific genes in post-meiotic cells, including X-linked genes that escape sex chromosome inactivation in haploid cells. Crotonylation marks active promoters and enhancers and confers resistance to transcriptional repressors. It is also associated with post-meiotically activated genes on autosomes. In terms of processing, lactylated in macrophages by EP300/P300 by using lactoyl-CoA directly derived from endogenous or exogenous lactate, leading to stimulates gene transcription.

It localises to the nucleus. It is found in the chromosome. In terms of biological role, core component of nucleosome. Nucleosomes wrap and compact DNA into chromatin, limiting DNA accessibility to the cellular machineries which require DNA as a template. Histones thereby play a central role in transcription regulation, DNA repair, DNA replication and chromosomal stability. DNA accessibility is regulated via a complex set of post-translational modifications of histones, also called histone code, and nucleosome remodeling. The chain is Histone H2B type 1-B from Homo sapiens (Human).